Reading from the N-terminus, the 1302-residue chain is Neuroglian (1302 aa).

An N-terminal signal peptide occupies residues 1 to 23 (MWRQSTILAALLVALLCAGSAES). Topologically, residues 24–1138 (KGNRPPRITK…ANAGWFIGMM (1115 aa)) are extracellular. 6 consecutive Ig-like C2-type domains span residues 29–133 (PRIT…AELN), 134–225 (AFKD…YKIG), 245–330 (PPVR…QSFS), 339–426 (PYFT…VYLN), 432–524 (PTIS…TRIT), and 521–610 (TRIT…ANLI). Cystine bridges form between Cys59/Cys111, Cys155/Cys212, Cys268/Cys317, and Cys360/Cys410. N-linked (GlcNAc...) asparagine glycosylation is found at Asn182 and Asn198. Residues Asn411 and Asn448 are each glycosylated (N-linked (GlcNAc...) asparagine). 5 consecutive Fibronectin type-III domains span residues 614–711 (VPNA…TQPD), 716–813 (NPDN…SGED), 818–915 (APTN…TPEG), 916–1017 (VPSP…LKDA), and 1021–1119 (APAT…TVEG). A disulfide bond links Cys625 and Cys706. N-linked (GlcNAc...) asparagine glycosylation is found at Asn652 and Asn683. Residue Asn821 is glycosylated (N-linked (GlcNAc...) asparagine). N-linked (GlcNAc...) asparagine glycosylation is present at Asn1125. A helical transmembrane segment spans residues 1139–1154 (LALAFIIILFIIICII). Topologically, residues 1155–1302 (RRNRGGKYDV…AAAGAVATYV (148 aa)) are cytoplasmic. Residues 1172–1182 (GRRDYPEEGGF) are compositionally biased toward basic and acidic residues. Disordered stretches follow at residues 1172–1223 (GRRD…GDTG) and 1236–1291 (VPGK…ASNG). A compositionally biased stretch (polar residues) spans 1188-1203 (PLDNKSAGRQSVSSAN). Positions 1253–1275 (AAAHQAAPTAGGSGAAGSAAAAG) are enriched in low complexity.

As to quaternary structure, forms a complex with Nrx-IV/Nrx and Cont. Forms a complex composed of septate junction proteins Nrx-IV/Nrx, Tsf2/MTf, Cont and Nrg during late embryogenesis. Restricted to the surface of neurons and glia in the developing nervous system. As to expression, restricted to non-neuronal tissues.

It is found in the cell membrane. The protein localises to the cell junction. The protein resides in the septate junction. Functionally, essential for septate junctions. Septate junctions, which are the equivalent of vertebrate tight junctions, are characterized by regular arrays of transverse structures that span the intermembrane space and form a physical barrier to diffusion. Required for formation of the hemolymph-brain barrier (the insect blood-brain barrier). Vital for embryonic development. Involved in the targeting for degradation or recycling of certain septate junction components, including kune and bou/boudin, by regulating their endocytosis. May play a role in neural and glial cell adhesion in the developing embryo. Its function is as follows. May be a more general cell adhesion molecule involved in non-neuronal tissues and imaginal disk morphogenesis. The chain is Neuroglian (Nrg) from Drosophila melanogaster (Fruit fly).